Consider the following 79-residue polypeptide: Acyl carrier protein (79 aa).

A Carrier domain is found at 1–76 (MSLEDDVIAI…DVFTYIKKRQ (76 aa)). Ser36 carries the post-translational modification O-(pantetheine 4'-phosphoryl)serine.

Belongs to the acyl carrier protein (ACP) family. In terms of processing, 4'-phosphopantetheine is transferred from CoA to a specific serine of apo-ACP by AcpS. This modification is essential for activity because fatty acids are bound in thioester linkage to the sulfhydryl of the prosthetic group.

The protein resides in the cytoplasm. The protein operates within lipid metabolism; fatty acid biosynthesis. Functionally, carrier of the growing fatty acid chain in fatty acid biosynthesis. The chain is Acyl carrier protein from Chlamydia pneumoniae (Chlamydophila pneumoniae).